The primary structure comprises 208 residues: Mediator of RNA polymerase II transcription subunit 18 (208 aa).

Belongs to the Mediator complex subunit 18 family. In terms of assembly, component of the Mediator complex.

The protein localises to the nucleus. Component of the Mediator complex, a coactivator involved in the regulated transcription of nearly all RNA polymerase II-dependent genes. Mediator functions as a bridge to convey information from gene-specific regulatory proteins to the basal RNA polymerase II transcription machinery. Mediator is recruited to promoters by direct interactions with regulatory proteins and serves as a scaffold for the assembly of a functional preinitiation complex with RNA polymerase II and the general transcription factors. The chain is Mediator of RNA polymerase II transcription subunit 18 (med18) from Danio rerio (Zebrafish).